The sequence spans 60 residues: Large ribosomal subunit protein bL32 (60 aa).

Positions 1 to 44 (MAVQQNKKSRSARDMRRSHDALEASTLSVEKTTGEVHLRHHVSP) are disordered. The span at 11 to 22 (SARDMRRSHDAL) shows a compositional bias: basic and acidic residues.

It belongs to the bacterial ribosomal protein bL32 family.

The sequence is that of Large ribosomal subunit protein bL32 from Pseudomonas fluorescens (strain SBW25).